We begin with the raw amino-acid sequence, 487 residues long: Berbamunine synthase (487 aa).

Residue C429 coordinates heme.

It belongs to the cytochrome P450 family. Heme serves as cofactor.

Its subcellular location is the endoplasmic reticulum membrane. It localises to the microsome membrane. It catalyses the reaction (R)-N-methylcoclaurine + (S)-N-methylcoclaurine + reduced [NADPH--hemoprotein reductase] + O2 = berbamunine + oxidized [NADPH--hemoprotein reductase] + 2 H2O + H(+). It functions in the pathway alkaloid biosynthesis; berbamunine biosynthesis; berbamunine from (R)-N-methylcoclaurine and (S)-N-methylcoclaurine: step 1/1. Functionally, forms the bisbenzylisoquinoline alkaloid berbamunine by phenol oxidation of N-methylcoclaurine without the incorporation of oxygen into the product. Oxidatively couples either two molecules of (R)-N-methylcoclaurine to form the (R,R) dimer guattegaumerine or one molecule each of (R)- and (S)-N-methylcoclaurine to form the (R,S) dimer berbamunine. This Berberis stolonifera (Barberry) protein is Berbamunine synthase (CYP80A1).